Reading from the N-terminus, the 694-residue chain is Elongation factor G (694 aa).

Residues 10-285 enclose the tr-type G domain; that stretch reads EKTRNIGIMA…GVVDYLPSPL (276 aa). GTP is bound by residues 19-26, 83-87, and 137-140; these read AHIDAGKT, DTPGH, and NKMD.

This sequence belongs to the TRAFAC class translation factor GTPase superfamily. Classic translation factor GTPase family. EF-G/EF-2 subfamily.

The protein resides in the cytoplasm. Functionally, catalyzes the GTP-dependent ribosomal translocation step during translation elongation. During this step, the ribosome changes from the pre-translocational (PRE) to the post-translocational (POST) state as the newly formed A-site-bound peptidyl-tRNA and P-site-bound deacylated tRNA move to the P and E sites, respectively. Catalyzes the coordinated movement of the two tRNA molecules, the mRNA and conformational changes in the ribosome. In Lactobacillus delbrueckii subsp. bulgaricus (strain ATCC BAA-365 / Lb-18), this protein is Elongation factor G.